Here is a 321-residue protein sequence, read N- to C-terminus: Aspartate carbamoyltransferase catalytic subunit (321 aa).

Residues Arg-60 and Thr-61 each contribute to the carbamoyl phosphate site. Lys-88 is a binding site for L-aspartate. 3 residues coordinate carbamoyl phosphate: Arg-110, His-138, and Gln-141. 2 residues coordinate L-aspartate: Arg-171 and Arg-225. Residues Gly-266 and Pro-267 each coordinate carbamoyl phosphate.

It belongs to the aspartate/ornithine carbamoyltransferase superfamily. ATCase family. Heterododecamer (2C3:3R2) of six catalytic PyrB chains organized as two trimers (C3), and six regulatory PyrI chains organized as three dimers (R2).

It carries out the reaction carbamoyl phosphate + L-aspartate = N-carbamoyl-L-aspartate + phosphate + H(+). Its pathway is pyrimidine metabolism; UMP biosynthesis via de novo pathway; (S)-dihydroorotate from bicarbonate: step 2/3. Catalyzes the condensation of carbamoyl phosphate and aspartate to form carbamoyl aspartate and inorganic phosphate, the committed step in the de novo pyrimidine nucleotide biosynthesis pathway. This chain is Aspartate carbamoyltransferase catalytic subunit, found in Sorangium cellulosum (strain So ce56) (Polyangium cellulosum (strain So ce56)).